The following is a 255-amino-acid chain: Imidazole glycerol phosphate synthase subunit HisF (255 aa).

Residues Asp-12 and Asp-131 contribute to the active site.

The protein belongs to the HisA/HisF family. Heterodimer of HisH and HisF.

The protein resides in the cytoplasm. The catalysed reaction is 5-[(5-phospho-1-deoxy-D-ribulos-1-ylimino)methylamino]-1-(5-phospho-beta-D-ribosyl)imidazole-4-carboxamide + L-glutamine = D-erythro-1-(imidazol-4-yl)glycerol 3-phosphate + 5-amino-1-(5-phospho-beta-D-ribosyl)imidazole-4-carboxamide + L-glutamate + H(+). Its pathway is amino-acid biosynthesis; L-histidine biosynthesis; L-histidine from 5-phospho-alpha-D-ribose 1-diphosphate: step 5/9. Functionally, IGPS catalyzes the conversion of PRFAR and glutamine to IGP, AICAR and glutamate. The HisF subunit catalyzes the cyclization activity that produces IGP and AICAR from PRFAR using the ammonia provided by the HisH subunit. The chain is Imidazole glycerol phosphate synthase subunit HisF from Neisseria meningitidis serogroup C (strain 053442).